The sequence spans 303 residues: RING finger protein 148 (303 aa).

A signal peptide spans 1 to 34 (MSLLRITSSAHSSASSRLWRLGIFLLLSLPDSKG). An N-linked (GlcNAc...) asparagine glycan is attached at N43. The PA domain maps to 65 to 167 (HSPLERVSGV…LKGMELLHLI (103 aa)). The chain crosses the membrane as a helical span at residues 186-208 (WLSHYIMSLFTFLTATVAYLFLY). The RING-type; atypical zinc finger occupies 256–297 (CVVCFDIYKPQDVVRILTCKHIFHKACIDPWLLAHRTCPMCK).

It is found in the membrane. The sequence is that of RING finger protein 148 (RNF148) from Bos taurus (Bovine).